We begin with the raw amino-acid sequence, 686 residues long: U-box domain-containing protein 19 (686 aa).

A U-box domain is found at 277–351; it reads LNVDDLRCPI…QSYSKQNGVV (75 aa). 5 ARM repeats span residues 406-445, 448-489, 491-533, 536-577, and 579-620; these read TFYR…NLSK, AGKT…YLSS, GDYS…SLLM, PDNH…KMAE, and PDGM…NLCH.

It catalyses the reaction S-ubiquitinyl-[E2 ubiquitin-conjugating enzyme]-L-cysteine + [acceptor protein]-L-lysine = [E2 ubiquitin-conjugating enzyme]-L-cysteine + N(6)-ubiquitinyl-[acceptor protein]-L-lysine.. Its pathway is protein modification; protein ubiquitination. Functions as an E3 ubiquitin ligase. The chain is U-box domain-containing protein 19 (PUB19) from Arabidopsis thaliana (Mouse-ear cress).